A 535-amino-acid polypeptide reads, in one-letter code: Alcohol O-acetyltransferase 2 (535 aa).

Positions 19-36 are membrane association; that stretch reads GHARRMGHLENYFAVLSR. Residues His-189 and Asp-193 each act as charge relay system in the active site. The tract at residues 515 to 532 is membrane association; that stretch reads RGEWESFCKLFYQTIGEF.

Belongs to the ATF1 alcohol acetyltransferase family.

Its subcellular location is the lipid droplet. It localises to the endoplasmic reticulum membrane. The enzyme catalyses an aliphatic alcohol + acetyl-CoA = an acetyl ester + CoA. Can use acetyl-CoA to synthesize acetate esters from various alcohols, producing ethyl acetate, isoamyl acetate, isobutyl acetate, butyl acetate, hexyl acetate, heptyl acetate and octyl acetate. ATF2 seems to play only a minor role in the acetate ester synthesis, compared to ATF1. Plays an active role in the detoxification hydroxysteroids and possibly certain phytochemicals, in association with the efflux pumps PDR5 and SNQ2. The sequence is that of Alcohol O-acetyltransferase 2 from Saccharomyces cerevisiae (strain ATCC 204508 / S288c) (Baker's yeast).